The following is a 272-amino-acid chain: Putative phosphoenolpyruvate synthase regulatory protein (272 aa).

152–159 (GVSRCGKT) provides a ligand contact to ADP.

It belongs to the pyruvate, phosphate/water dikinase regulatory protein family. PSRP subfamily.

It carries out the reaction [pyruvate, water dikinase] + ADP = [pyruvate, water dikinase]-phosphate + AMP + H(+). The catalysed reaction is [pyruvate, water dikinase]-phosphate + phosphate + H(+) = [pyruvate, water dikinase] + diphosphate. In terms of biological role, bifunctional serine/threonine kinase and phosphorylase involved in the regulation of the phosphoenolpyruvate synthase (PEPS) by catalyzing its phosphorylation/dephosphorylation. The protein is Putative phosphoenolpyruvate synthase regulatory protein of Pseudomonas savastanoi pv. phaseolicola (strain 1448A / Race 6) (Pseudomonas syringae pv. phaseolicola (strain 1448A / Race 6)).